Reading from the N-terminus, the 425-residue chain is Glutamyl-tRNA reductase (425 aa).

Residues threonine 51–arginine 54, serine 111, aspartate 116–glutamine 118, and glutamine 122 contribute to the substrate site. Cysteine 52 (nucleophile) is an active-site residue. Glycine 191–glycine 196 is a binding site for NADP(+).

It belongs to the glutamyl-tRNA reductase family. As to quaternary structure, homodimer.

It carries out the reaction (S)-4-amino-5-oxopentanoate + tRNA(Glu) + NADP(+) = L-glutamyl-tRNA(Glu) + NADPH + H(+). Its pathway is porphyrin-containing compound metabolism; protoporphyrin-IX biosynthesis; 5-aminolevulinate from L-glutamyl-tRNA(Glu): step 1/2. Functionally, catalyzes the NADPH-dependent reduction of glutamyl-tRNA(Glu) to glutamate 1-semialdehyde (GSA). In Cytophaga hutchinsonii (strain ATCC 33406 / DSM 1761 / CIP 103989 / NBRC 15051 / NCIMB 9469 / D465), this protein is Glutamyl-tRNA reductase.